A 256-amino-acid polypeptide reads, in one-letter code: Small ribosomal subunit protein eS1 (256 aa).

N-acetylalanine; partial is present on Ala-2.

The protein belongs to the eukaryotic ribosomal protein eS1 family. In terms of assembly, component of the small ribosomal subunit. Mature ribosomes consist of a small (40S) and a large (60S) subunit. The 40S subunit contains about 33 different proteins and 1 molecule of RNA (18S). The 60S subunit contains about 49 different proteins and 3 molecules of RNA (25S, 5.8S and 5S).

It localises to the cytoplasm. This chain is Small ribosomal subunit protein eS1, found in Coprinopsis cinerea (strain Okayama-7 / 130 / ATCC MYA-4618 / FGSC 9003) (Inky cap fungus).